We begin with the raw amino-acid sequence, 182 residues long: LIM domain-containing protein C (182 aa).

2 consecutive LIM zinc-binding domains span residues 3–63 (SICP…LFRQ) and 110–170 (TNCP…KFGP).

The protein localises to the cell projection. The protein resides in the pseudopodium. It localises to the cytoplasm. Its subcellular location is the cell cortex. It is found in the cytoskeleton. Binds to F-actin and may modulate the chemotactic response during early development and contribute to the maintenance of the strength of the actin cytoskeleton. The protein is LIM domain-containing protein C (limC) of Dictyostelium discoideum (Social amoeba).